The following is a 68-amino-acid chain: Protein DsrB (68 aa).

Belongs to the DsrB family.

The sequence is that of Protein DsrB from Sodalis glossinidius (strain morsitans).